Here is a 362-residue protein sequence, read N- to C-terminus: Adenosine deaminase (362 aa).

Residues histidine 19 and histidine 21 each coordinate Zn(2+). Positions 21, 23, and 181 each coordinate substrate. Residue histidine 208 coordinates Zn(2+). Residue glutamate 211 is the Proton donor of the active site. A Zn(2+)-binding site is contributed by aspartate 300.

This sequence belongs to the metallo-dependent hydrolases superfamily. Adenosine and AMP deaminases family. Adenosine deaminase subfamily. Zn(2+) is required as a cofactor.

It carries out the reaction adenosine + H2O + H(+) = inosine + NH4(+). It catalyses the reaction 2'-deoxyadenosine + H2O + H(+) = 2'-deoxyinosine + NH4(+). Functionally, catalyzes the hydrolytic deamination of adenosine and 2-deoxyadenosine. This chain is Adenosine deaminase, found in Mycobacterium sp. (strain MCS).